Consider the following 198-residue polypeptide: 3-isopropylmalate dehydratase small subunit (198 aa).

It belongs to the LeuD family. LeuD type 1 subfamily. Heterodimer of LeuC and LeuD.

The enzyme catalyses (2R,3S)-3-isopropylmalate = (2S)-2-isopropylmalate. The protein operates within amino-acid biosynthesis; L-leucine biosynthesis; L-leucine from 3-methyl-2-oxobutanoate: step 2/4. Catalyzes the isomerization between 2-isopropylmalate and 3-isopropylmalate, via the formation of 2-isopropylmaleate. This chain is 3-isopropylmalate dehydratase small subunit, found in Colwellia psychrerythraea (strain 34H / ATCC BAA-681) (Vibrio psychroerythus).